The primary structure comprises 313 residues: Protein FixB (313 aa).

FAD is bound at residue 255 to 283 (LYLAVGISGQIQHMVGANASQTIFAINKD).

This sequence belongs to the ETF alpha-subunit/FixB family. As to quaternary structure, heterodimer of FixA and FixB.

Its pathway is amine and polyamine metabolism; carnitine metabolism. Required for anaerobic carnitine reduction. May bring reductant to CaiA. This Escherichia coli O7:K1 (strain IAI39 / ExPEC) protein is Protein FixB.